We begin with the raw amino-acid sequence, 314 residues long: Ornithine carbamoyltransferase (314 aa).

Carbamoyl phosphate-binding positions include 58–61 (STRT), glutamine 85, arginine 109, and 136–139 (HPLQ). Residues asparagine 168, aspartate 232, and 236–237 (SM) each bind L-ornithine. Carbamoyl phosphate-binding positions include 272–273 (CL) and arginine 300.

The protein belongs to the aspartate/ornithine carbamoyltransferase superfamily. OTCase family.

The protein resides in the cytoplasm. It catalyses the reaction carbamoyl phosphate + L-ornithine = L-citrulline + phosphate + H(+). The protein operates within amino-acid biosynthesis; L-arginine biosynthesis; L-arginine from L-ornithine and carbamoyl phosphate: step 1/3. Its function is as follows. Reversibly catalyzes the transfer of the carbamoyl group from carbamoyl phosphate (CP) to the N(epsilon) atom of ornithine (ORN) to produce L-citrulline. In Hyperthermus butylicus (strain DSM 5456 / JCM 9403 / PLM1-5), this protein is Ornithine carbamoyltransferase.